Here is a 366-residue protein sequence, read N- to C-terminus: Galactoside alpha-(1,2)-fucosyltransferase 1 (366 aa).

The Cytoplasmic segment spans residues 1–8 (MWPPSHRQ). A helical; Signal-anchor for type II membrane protein membrane pass occupies residues 9-25 (LCLAFLLVCVLSVISFF). Topologically, residues 26 to 366 (LHIHQDSFPH…LSSLWTLAKP (341 aa)) are lumenal. Residues asparagine 66, asparagine 302, and asparagine 328 are each glycosylated (N-linked (GlcNAc...) asparagine).

It belongs to the glycosyltransferase 11 family.

It localises to the golgi apparatus. The protein localises to the golgi stack membrane. The enzyme catalyses a beta-D-galactosyl-(1-&gt;4)-N-acetyl-beta-D-glucosaminyl derivative + GDP-beta-L-fucose = an alpha-L-Fuc-(1-&gt;2)-beta-D-Gal-(1-&gt;4)-beta-D-GlcNAc derivative + GDP + H(+). It carries out the reaction a ganglioside GA1 + GDP-beta-L-fucose = a ganglioside Fuc-GA1 + GDP + H(+). It catalyses the reaction a beta-D-Gal-(1-&gt;3)-beta-D-GlcNAc-(1-&gt;3)-beta-D-Gal-(1-&gt;4)-beta-D-Glc-(1&lt;-&gt;1')-Cer(d18:1(4E)) + GDP-beta-L-fucose = alpha-L-fucosyl-(1-&gt;2)- beta-D-galactosyl-(1-&gt;3)-N-acetyl-beta-D-glucosaminyl-(1-&gt;3)-beta-D-galactosyl-(1-&gt;4)-beta-D-glucosyl-(1&lt;-&gt;1')-N-acylsphing-4-enine + GDP + H(+). The catalysed reaction is a neolactoside nLc4Cer(d18:1(4E)) + GDP-beta-L-fucose = a neolactoside IV(2)-alpha-Fuc-nLc4Cer(d18:1(4E)) + GDP + H(+). The enzyme catalyses a ganglioside GM1 + GDP-beta-L-fucose = a ganglioside Fuc-GM1 + GDP + H(+). It carries out the reaction beta-D-galactosyl-(1-&gt;3)-N-acetyl-D-galactosamine + GDP-beta-L-fucose = alpha-L-fucosyl-(1-&gt;2)-beta-D-galactosyl-(1-&gt;3)-N-acetyl-D-galactosamine + GDP + H(+). The protein operates within protein modification; protein glycosylation. In terms of biological role, catalyzes the transfer of L-fucose, from a guanosine diphosphate-beta-L-fucose, to the terminal galactose residue of glycoconjugates through an alpha(1,2) linkage leading to H antigen synthesis that is an intermediate substrate in the synthesis of ABO blood group antigens. H antigen is essential for maturation of the glomerular layer of the main olfactory bulb, in cell migration and early cell-cell contacts during tumor associated angiogenesis. Preferentially fucosylates soluble lactose and to a lesser extent fucosylates glycolipids gangliosides GA1 and GM1a. This is Galactoside alpha-(1,2)-fucosyltransferase 1 from Pan troglodytes (Chimpanzee).